The chain runs to 202 residues: Small ribosomal subunit protein uS2 (202 aa).

The protein belongs to the universal ribosomal protein uS2 family.

This Pyrococcus abyssi (strain GE5 / Orsay) protein is Small ribosomal subunit protein uS2 (rps2).